We begin with the raw amino-acid sequence, 170 residues long: Probable chorismate pyruvate-lyase (170 aa).

Positions 77, 114, and 157 each coordinate substrate.

It belongs to the UbiC family.

It is found in the cytoplasm. The catalysed reaction is chorismate = 4-hydroxybenzoate + pyruvate. Its pathway is cofactor biosynthesis; ubiquinone biosynthesis. In terms of biological role, removes the pyruvyl group from chorismate, with concomitant aromatization of the ring, to provide 4-hydroxybenzoate (4HB) for the ubiquinone pathway. The sequence is that of Probable chorismate pyruvate-lyase from Pasteurella multocida (strain Pm70).